Reading from the N-terminus, the 1159-residue chain is RNA-directed RNA polymerase (1159 aa).

The RdRp catalytic domain occupies 545-727; that stretch reads LTYGVLAEDT…KALASYTGLE (183 aa).

Belongs to the reoviridae RNA-directed RNA polymerase family. As to quaternary structure, interacts with VP3 (Potential). Interacts with VP2 (Potential). Interacts with NSP5; this interaction is probably necessary for the formation of functional virus factories.

The protein resides in the virion. The catalysed reaction is RNA(n) + a ribonucleoside 5'-triphosphate = RNA(n+1) + diphosphate. In terms of biological role, RNA-directed RNA polymerase that is involved in both transcription and genome replication. Together with VP3 capping enzyme, forms an enzyme complex positioned near the channels situated at each of the five-fold vertices of the core. Following infection, the outermost layer of the virus is lost, leaving a double-layered particle (DLP) made up of the core and VP6 shell. VP1 then catalyzes the transcription of fully conservative plus-strand genomic RNAs that are extruded through the DLP's channels into the cytoplasm where they function as mRNAs for translation of viral proteins. One copy of each of the viral (+)RNAs is also recruited during core assembly, together with newly synthesized polymerase complexes and VP2. The polymerase of these novo-formed particles catalyzes the synthesis of complementary minus-strands leading to dsDNA formation. To do so, the polymerase specifically recognizes conserved 3' sequence(s) in plus-strand RNA templates. Once dsRNA synthesis is complete, the polymerase switches to the transcriptional mode, thus providing secondary transcription. This is RNA-directed RNA polymerase from Homo sapiens (Human).